An 816-amino-acid chain; its full sequence is Leucine--tRNA ligase (816 aa).

A 'HIGH' region motif is present at residues 40–51 (PYPSGSGLHVGH). The 'KMSKS' region signature appears at 576-580 (KMSKS). An ATP-binding site is contributed by K579.

The protein belongs to the class-I aminoacyl-tRNA synthetase family.

It localises to the cytoplasm. The catalysed reaction is tRNA(Leu) + L-leucine + ATP = L-leucyl-tRNA(Leu) + AMP + diphosphate. This chain is Leucine--tRNA ligase, found in Chlorobium phaeobacteroides (strain DSM 266 / SMG 266 / 2430).